A 153-amino-acid chain; its full sequence is NADPH-dependent 7-cyano-7-deazaguanine reductase (153 aa).

A disordered region spans residues 1 to 30 (MDSIETHAKQLGQQTPLPASPEAAQLDRVP). The active-site Thioimide intermediate is the Cys51. Residue Asp58 is the Proton donor of the active site. Substrate is bound by residues 73–75 (VES) and 92–93 (HE).

It belongs to the GTP cyclohydrolase I family. QueF type 1 subfamily.

It is found in the cytoplasm. The enzyme catalyses 7-aminomethyl-7-carbaguanine + 2 NADP(+) = 7-cyano-7-deazaguanine + 2 NADPH + 3 H(+). Its pathway is tRNA modification; tRNA-queuosine biosynthesis. Functionally, catalyzes the NADPH-dependent reduction of 7-cyano-7-deazaguanine (preQ0) to 7-aminomethyl-7-deazaguanine (preQ1). This chain is NADPH-dependent 7-cyano-7-deazaguanine reductase, found in Methylorubrum extorquens (strain CM4 / NCIMB 13688) (Methylobacterium extorquens).